The chain runs to 220 residues: Fructose-6-phosphate aldolase (220 aa).

Residue lysine 85 is the Schiff-base intermediate with substrate of the active site.

This sequence belongs to the transaldolase family. Type 3A subfamily. Homodecamer.

The protein localises to the cytoplasm. The enzyme catalyses beta-D-fructose 6-phosphate = dihydroxyacetone + D-glyceraldehyde 3-phosphate. Catalyzes the reversible formation of fructose 6-phosphate from dihydroxyacetone and D-glyceraldehyde 3-phosphate via an aldolization reaction. The polypeptide is Fructose-6-phosphate aldolase (Salmonella schwarzengrund (strain CVM19633)).